The sequence spans 83 residues: Cytochrome b559 subunit alpha (83 aa).

The helical transmembrane segment at 21-35 (VIHSITIPSLFIAGW) threads the bilayer. H23 is a heme binding site.

It belongs to the PsbE/PsbF family. As to quaternary structure, heterodimer of an alpha subunit and a beta subunit. PSII is composed of 1 copy each of membrane proteins PsbA, PsbB, PsbC, PsbD, PsbE, PsbF, PsbH, PsbI, PsbJ, PsbK, PsbL, PsbM, PsbT, PsbX, PsbY, PsbZ, Psb30/Ycf12, at least 3 peripheral proteins of the oxygen-evolving complex and a large number of cofactors. It forms dimeric complexes. The cofactor is heme b.

Its subcellular location is the plastid. It is found in the chloroplast thylakoid membrane. This b-type cytochrome is tightly associated with the reaction center of photosystem II (PSII). PSII is a light-driven water:plastoquinone oxidoreductase that uses light energy to abstract electrons from H(2)O, generating O(2) and a proton gradient subsequently used for ATP formation. It consists of a core antenna complex that captures photons, and an electron transfer chain that converts photonic excitation into a charge separation. In Daucus carota (Wild carrot), this protein is Cytochrome b559 subunit alpha.